We begin with the raw amino-acid sequence, 207 residues long: Ribosomal RNA small subunit methyltransferase G (207 aa).

Residues Gly-73, Leu-78, 124–125 (VE), and Arg-139 each bind S-adenosyl-L-methionine.

Belongs to the methyltransferase superfamily. RNA methyltransferase RsmG family.

It localises to the cytoplasm. It catalyses the reaction guanosine(527) in 16S rRNA + S-adenosyl-L-methionine = N(7)-methylguanosine(527) in 16S rRNA + S-adenosyl-L-homocysteine. In terms of biological role, specifically methylates the N7 position of guanine in position 527 of 16S rRNA. The polypeptide is Ribosomal RNA small subunit methyltransferase G (Escherichia coli O17:K52:H18 (strain UMN026 / ExPEC)).